Here is a 395-residue protein sequence, read N- to C-terminus: 1-deoxy-D-xylulose 5-phosphate reductoisomerase (395 aa).

NADPH is bound by residues Thr-10, Gly-11, Ser-12, Ile-13, Ala-36, and Asn-123. 1-deoxy-D-xylulose 5-phosphate is bound at residue Lys-124. Glu-125 contacts NADPH. Residue Asp-149 coordinates Mn(2+). Residues Ser-150, Glu-151, Ser-185, and His-208 each coordinate 1-deoxy-D-xylulose 5-phosphate. Glu-151 contributes to the Mn(2+) binding site. NADPH is bound at residue Gly-214. Ser-221, Asn-226, Lys-227, and Glu-230 together coordinate 1-deoxy-D-xylulose 5-phosphate. Residue Glu-230 participates in Mn(2+) binding.

Belongs to the DXR family. The cofactor is Mg(2+). Mn(2+) is required as a cofactor.

It catalyses the reaction 2-C-methyl-D-erythritol 4-phosphate + NADP(+) = 1-deoxy-D-xylulose 5-phosphate + NADPH + H(+). It participates in isoprenoid biosynthesis; isopentenyl diphosphate biosynthesis via DXP pathway; isopentenyl diphosphate from 1-deoxy-D-xylulose 5-phosphate: step 1/6. Functionally, catalyzes the NADPH-dependent rearrangement and reduction of 1-deoxy-D-xylulose-5-phosphate (DXP) to 2-C-methyl-D-erythritol 4-phosphate (MEP). This is 1-deoxy-D-xylulose 5-phosphate reductoisomerase from Shewanella amazonensis (strain ATCC BAA-1098 / SB2B).